The primary structure comprises 94 residues: Integration host factor subunit beta (94 aa).

This sequence belongs to the bacterial histone-like protein family. As to quaternary structure, heterodimer of an alpha and a beta chain.

In terms of biological role, this protein is one of the two subunits of integration host factor, a specific DNA-binding protein that functions in genetic recombination as well as in transcriptional and translational control. The chain is Integration host factor subunit beta from Dechloromonas aromatica (strain RCB).